Here is a 1047-residue protein sequence, read N- to C-terminus: Atrial natriuretic peptide receptor 2 (1047 aa).

An N-terminal signal peptide occupies residues 1–16; the sequence is MALPSLLLVVAALAGG. Over 17-458 the chain is Extracellular; the sequence is VRPPGARNLT…DKTPLSTLAI (442 aa). 2 N-linked (GlcNAc...) asparagine glycosylation sites follow: Asn24 and Asn35. Cys75 and Cys101 are joined by a disulfide. N-linked (GlcNAc...) asparagine glycosylation is found at Asn161, Asn195, Asn244, Asn277, and Asn349. A helical membrane pass occupies residues 459–478; sequence VALGTGVTFIMFGVSSFLIF. At 479-1047 the chain is on the cytoplasmic side; that stretch reads RKLMLEKELA…GEQKGPPGLL (569 aa). Ser513 bears the Phosphoserine mark. The 274-residue stretch at 513–786 folds into the Protein kinase domain; it reads SRLTLSLRGS…PDFGQIKGFI (274 aa). Thr516 carries the post-translational modification Phosphothreonine. Phosphoserine is present on residues Ser518, Ser522, Ser523, and Ser526. Thr529 carries the post-translational modification Phosphothreonine. The region spanning 861-991 is the Guanylate cyclase domain; it reads TIYFSDIVGF…DTVNTASRME (131 aa).

The protein belongs to the adenylyl cyclase class-4/guanylyl cyclase family. In terms of processing, phosphorylated. Phosphorylation of the protein kinase-like domain is required for full activation by CNP. Glycosylated. As to expression, widely expressed. Expressed in the columnar proliferating and prehypertrophic chondrocyte layers of the tibia.

The protein localises to the cell membrane. It catalyses the reaction GTP = 3',5'-cyclic GMP + diphosphate. Its function is as follows. Receptor for the C-type natriuretic peptide NPPC/CNP hormone. Has guanylate cyclase activity upon binding of its ligand. May play a role in the regulation of skeletal growth. In Mus musculus (Mouse), this protein is Atrial natriuretic peptide receptor 2 (Npr2).